The chain runs to 152 residues: Large ribosomal subunit protein uL22 (152 aa).

The segment covering 124-143 has biased composition (low complexity); that stretch reads APTKAASKKAAPAKQTTPAA. A disordered region spans residues 124-152; it reads APTKAASKKAAPAKQTTPAATESKTEGAE.

It belongs to the universal ribosomal protein uL22 family. In terms of assembly, part of the 50S ribosomal subunit.

In terms of biological role, this protein binds specifically to 23S rRNA; its binding is stimulated by other ribosomal proteins, e.g. L4, L17, and L20. It is important during the early stages of 50S assembly. It makes multiple contacts with different domains of the 23S rRNA in the assembled 50S subunit and ribosome. Functionally, the globular domain of the protein is located near the polypeptide exit tunnel on the outside of the subunit, while an extended beta-hairpin is found that lines the wall of the exit tunnel in the center of the 70S ribosome. This Salinispora arenicola (strain CNS-205) protein is Large ribosomal subunit protein uL22.